The following is a 315-amino-acid chain: Lipoyl synthase (315 aa).

Cys62, Cys67, Cys73, Cys88, Cys92, Cys95, and Ser302 together coordinate [4Fe-4S] cluster. Residues 74-291 (FGKGTATFMI…ETEALRMGFR (218 aa)) form the Radical SAM core domain.

It belongs to the radical SAM superfamily. Lipoyl synthase family. The cofactor is [4Fe-4S] cluster.

It localises to the cytoplasm. The enzyme catalyses [[Fe-S] cluster scaffold protein carrying a second [4Fe-4S](2+) cluster] + N(6)-octanoyl-L-lysyl-[protein] + 2 oxidized [2Fe-2S]-[ferredoxin] + 2 S-adenosyl-L-methionine + 4 H(+) = [[Fe-S] cluster scaffold protein] + N(6)-[(R)-dihydrolipoyl]-L-lysyl-[protein] + 4 Fe(3+) + 2 hydrogen sulfide + 2 5'-deoxyadenosine + 2 L-methionine + 2 reduced [2Fe-2S]-[ferredoxin]. The protein operates within protein modification; protein lipoylation via endogenous pathway; protein N(6)-(lipoyl)lysine from octanoyl-[acyl-carrier-protein]: step 2/2. Catalyzes the radical-mediated insertion of two sulfur atoms into the C-6 and C-8 positions of the octanoyl moiety bound to the lipoyl domains of lipoate-dependent enzymes, thereby converting the octanoylated domains into lipoylated derivatives. This Azoarcus sp. (strain BH72) protein is Lipoyl synthase.